Reading from the N-terminus, the 262-residue chain is 3-methyl-2-oxobutanoate hydroxymethyltransferase (262 aa).

Asp43 and Asp82 together coordinate Mg(2+). 3-methyl-2-oxobutanoate contacts are provided by residues 43–44 (DS), Asp82, and Lys111. Residue Glu113 coordinates Mg(2+). Glu180 acts as the Proton acceptor in catalysis.

The protein belongs to the PanB family. As to quaternary structure, homodecamer; pentamer of dimers. Mg(2+) is required as a cofactor.

It is found in the cytoplasm. It carries out the reaction 3-methyl-2-oxobutanoate + (6R)-5,10-methylene-5,6,7,8-tetrahydrofolate + H2O = 2-dehydropantoate + (6S)-5,6,7,8-tetrahydrofolate. Its pathway is cofactor biosynthesis; coenzyme A biosynthesis. Catalyzes the reversible reaction in which hydroxymethyl group from 5,10-methylenetetrahydrofolate is transferred onto alpha-ketoisovalerate to form ketopantoate. This is 3-methyl-2-oxobutanoate hydroxymethyltransferase from Pyrobaculum aerophilum (strain ATCC 51768 / DSM 7523 / JCM 9630 / CIP 104966 / NBRC 100827 / IM2).